A 121-amino-acid chain; its full sequence is Flagellar protein FliT (121 aa).

The required for homodimerization stretch occupies residues 1–50; it reads MNNAPHLYFAWQQLVEKSQLMLRLATEEQWDELIASEMAYVNAVQEIAHL. The tract at residues 60–98 is fliD binding; that stretch reads MQEQLRPMLRLILDNESKVKQLLQIRMDELAKLVGQSSV.

The protein belongs to the FliT family. As to quaternary structure, homodimer. Interacts with FliD and FlhC.

It localises to the cytoplasm. The protein resides in the cytosol. Its function is as follows. Dual-function protein that regulates the transcription of class 2 flagellar operons and that also acts as an export chaperone for the filament-capping protein FliD. As a transcriptional regulator, acts as an anti-FlhDC factor; it directly binds FlhC, thus inhibiting the binding of the FlhC/FlhD complex to class 2 promoters, resulting in decreased expression of class 2 flagellar operons. As a chaperone, effects FliD transition to the membrane by preventing its premature polymerization, and by directing it to the export apparatus. The protein is Flagellar protein FliT of Escherichia coli O9:H4 (strain HS).